Reading from the N-terminus, the 333-residue chain is DNA primase small subunit PriS (333 aa).

Catalysis depends on residues aspartate 96, aspartate 98, and aspartate 237.

It belongs to the eukaryotic-type primase small subunit family. Heterodimer of a small subunit (PriS) and a large subunit (PriL). The cofactor is Mg(2+). Mn(2+) is required as a cofactor.

Functionally, catalytic subunit of DNA primase, an RNA polymerase that catalyzes the synthesis of short RNA molecules used as primers for DNA polymerase during DNA replication. The small subunit contains the primase catalytic core and has DNA synthesis activity on its own. Binding to the large subunit stabilizes and modulates the activity, increasing the rate of DNA synthesis while decreasing the length of the DNA fragments, and conferring RNA synthesis capability. The DNA polymerase activity may enable DNA primase to also catalyze primer extension after primer synthesis. May also play a role in DNA repair. This chain is DNA primase small subunit PriS, found in Thermoplasma volcanium (strain ATCC 51530 / DSM 4299 / JCM 9571 / NBRC 15438 / GSS1).